The primary structure comprises 361 residues: PTI1-like tyrosine-protein kinase At3g15890 (361 aa).

A Protein kinase domain is found at 39–328 (FNYDNKLGEG…ISELEANPLF (290 aa)). Residues 45–53 (LGEGRFGSV) and lysine 67 contribute to the ATP site. The active-site Proton acceptor is aspartate 165. Disordered stretches follow at residues 195–219 (TGDG…SGKE) and 323–361 (EANP…QQQE). Positions 351-361 (LEDKDHQQQQE) are enriched in basic and acidic residues.

Belongs to the protein kinase superfamily. Tyr protein kinase family.

The catalysed reaction is L-tyrosyl-[protein] + ATP = O-phospho-L-tyrosyl-[protein] + ADP + H(+). The chain is PTI1-like tyrosine-protein kinase At3g15890 from Arabidopsis thaliana (Mouse-ear cress).